Reading from the N-terminus, the 144-residue chain is uncharacterized protein (144 aa).

In terms of domain architecture, Rhodanese spans 50–140; that stretch reads NQDKAIVVDT…YWKTDNLPLI (91 aa).

This is an uncharacterized protein from Buchnera aphidicola subsp. Acyrthosiphon pisum (strain APS) (Acyrthosiphon pisum symbiotic bacterium).